Here is a 455-residue protein sequence, read N- to C-terminus: Serine--tRNA ligase (455 aa).

Position 252 to 254 (252 to 254) interacts with L-serine; that stretch reads TAE. ATP contacts are provided by residues 283 to 285 and V299; that span reads RKE. L-serine is bound at residue E306. 370-373 contacts ATP; sequence EVVS. T406 is a binding site for L-serine.

It belongs to the class-II aminoacyl-tRNA synthetase family. Type-1 seryl-tRNA synthetase subfamily. Homodimer. The tRNA molecule binds across the dimer.

It is found in the cytoplasm. The catalysed reaction is tRNA(Ser) + L-serine + ATP = L-seryl-tRNA(Ser) + AMP + diphosphate + H(+). The enzyme catalyses tRNA(Sec) + L-serine + ATP = L-seryl-tRNA(Sec) + AMP + diphosphate + H(+). The protein operates within aminoacyl-tRNA biosynthesis; selenocysteinyl-tRNA(Sec) biosynthesis; L-seryl-tRNA(Sec) from L-serine and tRNA(Sec): step 1/1. Catalyzes the attachment of serine to tRNA(Ser). Is also able to aminoacylate tRNA(Sec) with serine, to form the misacylated tRNA L-seryl-tRNA(Sec), which will be further converted into selenocysteinyl-tRNA(Sec). This Pyrococcus abyssi (strain GE5 / Orsay) protein is Serine--tRNA ligase.